Here is a 347-residue protein sequence, read N- to C-terminus: L-threonine 3-dehydrogenase (347 aa).

C42 serves as a coordination point for Zn(2+). Residues T44 and H47 each act as charge relay system in the active site. Residues H67, E68, C97, C100, C103, and C111 each contribute to the Zn(2+) site. Residues I179, E199, R204, 266 to 268, and 291 to 292 contribute to the NAD(+) site; these read LGL and IT.

This sequence belongs to the zinc-containing alcohol dehydrogenase family. In terms of assembly, homotetramer. It depends on Zn(2+) as a cofactor.

Its subcellular location is the cytoplasm. The enzyme catalyses L-threonine + NAD(+) = (2S)-2-amino-3-oxobutanoate + NADH + H(+). Its pathway is amino-acid degradation; L-threonine degradation via oxydo-reductase pathway; glycine from L-threonine: step 1/2. In terms of biological role, catalyzes the NAD(+)-dependent oxidation of L-threonine to 2-amino-3-ketobutyrate. In Caldanaerobacter subterraneus subsp. tengcongensis (strain DSM 15242 / JCM 11007 / NBRC 100824 / MB4) (Thermoanaerobacter tengcongensis), this protein is L-threonine 3-dehydrogenase.